The chain runs to 261 residues: MRFLILFLALSLGGIDAAPPVQSRIVGGFNCEKNSQPWQVAVYRFTKYQCGGILLNANWVLTAAHCHNDKYQVWLGKNNFLEDEPSAQHRLVSKAIPHPDFNMSLLNEHTPQPEDDYSNDLMLLRLKKPADITDVVKPIDLPTEEPKLGSTCLASGWGSITPVKYEYPDELQCVNLKLLPNEDCAKAHIEKVTDDMLCAGDMDGGKDTCAGDSGGPLICDGVLQGITSWGPSPCGKPNVPGIYTRVLNFNTWIRETMAEND.

An N-terminal signal peptide occupies residues 1-18; that stretch reads MRFLILFLALSLGGIDAA. Positions 19–24 are cleaved as a propeptide — activation peptide; sequence PPVQSR. The 234-residue stretch at 25–258 folds into the Peptidase S1 domain; it reads IVGGFNCEKN…FNTWIRETMA (234 aa). 5 disulfide bridges follow: cysteine 31/cysteine 173, cysteine 50/cysteine 66, cysteine 152/cysteine 219, cysteine 184/cysteine 198, and cysteine 209/cysteine 234. The active-site Charge relay system is the histidine 65. The N-linked (GlcNAc...) asparagine glycan is linked to asparagine 102. The active-site Charge relay system is the aspartate 120. Serine 213 serves as the catalytic Charge relay system.

This sequence belongs to the peptidase S1 family. Kallikrein subfamily.

The enzyme catalyses Preferential cleavage of Arg-|-Xaa bonds in small molecule substrates. Highly selective action to release kallidin (lysyl-bradykinin) from kininogen involves hydrolysis of Met-|-Xaa or Leu-|-Xaa.. In terms of biological role, glandular kallikreins cleave Met-Lys and Arg-Ser bonds in kininogen to release Lys-bradykinin. The sequence is that of Kallikrein-1 (Klk1) from Mus musculus (Mouse).